The primary structure comprises 242 residues: MNIDVITLFPDFFTSGLQSGLLGKALANHIATVNLINPRDFALDKHHRVDDIPYGGGVGMVLKPEPIFAAVNSVHRLPSTQVILLTPQGSPLTQTTLQDLSTNYQQLILICGHYEGVDERIRYLADREISLGDFILTCGEIPALALINGVVRLLPGTVGKVESLKAESFEDGLLDYPQYTRPAVFQDWQIPEVLRSGNHQLIAQWRKEQQIQRTQQRRPDLWEKFEERRKQKIEDRKHEQAE.

S-adenosyl-L-methionine is bound by residues glycine 112 and 131–136 (LGDFIL).

Belongs to the RNA methyltransferase TrmD family. Homodimer.

It localises to the cytoplasm. The catalysed reaction is guanosine(37) in tRNA + S-adenosyl-L-methionine = N(1)-methylguanosine(37) in tRNA + S-adenosyl-L-homocysteine + H(+). Its function is as follows. Specifically methylates guanosine-37 in various tRNAs. This is tRNA (guanine-N(1)-)-methyltransferase from Crocosphaera subtropica (strain ATCC 51142 / BH68) (Cyanothece sp. (strain ATCC 51142)).